The sequence spans 261 residues: uncharacterized protein (261 aa).

The first 22 residues, 1–22 (MRYLKKVTIYISLLILTIFIGG), serve as a signal peptide directing secretion. Residue cysteine 23 is the site of N-palmitoyl cysteine attachment. Cysteine 23 is lipidated: S-diacylglycerol cysteine.

This sequence belongs to the staphylococcal tandem lipoprotein family.

The protein localises to the cell membrane. This is an uncharacterized protein from Staphylococcus epidermidis (strain ATCC 35984 / DSM 28319 / BCRC 17069 / CCUG 31568 / BM 3577 / RP62A).